Reading from the N-terminus, the 494-residue chain is Glycerol kinase (494 aa).

Threonine 13 lines the ADP pocket. Positions 13, 14, and 15 each coordinate ATP. Position 13 (threonine 13) interacts with sn-glycerol 3-phosphate. Arginine 17 serves as a coordination point for ADP. Residues arginine 83, glutamate 84, tyrosine 135, and aspartate 244 each coordinate sn-glycerol 3-phosphate. Glycerol-binding residues include arginine 83, glutamate 84, tyrosine 135, aspartate 244, and glutamine 245. Positions 266 and 309 each coordinate ADP. ATP-binding residues include threonine 266, glycine 309, glutamine 313, and glycine 410. 2 residues coordinate ADP: glycine 410 and asparagine 414.

This sequence belongs to the FGGY kinase family.

The enzyme catalyses glycerol + ATP = sn-glycerol 3-phosphate + ADP + H(+). It participates in polyol metabolism; glycerol degradation via glycerol kinase pathway; sn-glycerol 3-phosphate from glycerol: step 1/1. Its activity is regulated as follows. Inhibited by fructose 1,6-bisphosphate (FBP). Its function is as follows. Key enzyme in the regulation of glycerol uptake and metabolism. Catalyzes the phosphorylation of glycerol to yield sn-glycerol 3-phosphate. In Shewanella putrefaciens (strain CN-32 / ATCC BAA-453), this protein is Glycerol kinase.